A 506-amino-acid polypeptide reads, in one-letter code: COP9 signalosome complex subunit 2 (506 aa).

One can recognise a PCI domain in the interval Ser252–Asp420. Residues Ser482–Lys491 are compositionally biased toward basic residues. Residues Ser482–Phe506 form a disordered region. A compositionally biased stretch (gly residues) spans Gly492–Phe506.

This sequence belongs to the CSN2 family. As to quaternary structure, component of the COP9 signalosome (CSN) complex.

The protein resides in the cytoplasm. It is found in the nucleus. In terms of biological role, component of the COP9 signalosome (CSN) complex that acts as an regulator of the ubiquitin (Ubl) conjugation pathway by mediating the deneddylation of the cullin subunit of SCF-type E3 ubiquitin-protein ligase complexes. The CSN complex seems to link protein degradation to sexual development. Required for fruit body formation. The protein is COP9 signalosome complex subunit 2 (csnB) of Emericella nidulans (strain FGSC A4 / ATCC 38163 / CBS 112.46 / NRRL 194 / M139) (Aspergillus nidulans).